Here is a 273-residue protein sequence, read N- to C-terminus: Translation initiation factor IF-3, mitochondrial (273 aa).

Residues 1 to 32 (MAALFLKKLTLQTVKTENYCIRRCLGKYILQG) constitute a mitochondrion transit peptide. The propeptide at 33-92 (PAPTQQPPRPSCLIHAKAFSTEDTQDEMTKKKKNETAFSSVGRKINERIIHVLDEQGNDL) is removed in mature form. The disordered stretch occupies residues 242 to 273 (EEAAWKAAPDTPRRDALNGGDGKDGASGVLPQ). The span at 252-265 (TPRRDALNGGDGKD) shows a compositional bias: basic and acidic residues.

It belongs to the IF-3 family.

The protein resides in the mitochondrion. IF-3 binds to the 28S ribosomal subunit and shifts the equilibrium between 55S ribosomes and their 39S and 28S subunits in favor of the free subunits, thus enhancing the availability of 28S subunits on which protein synthesis initiation begins. This chain is Translation initiation factor IF-3, mitochondrial (MTIF3), found in Bos taurus (Bovine).